Here is a 598-residue protein sequence, read N- to C-terminus: Arginine--tRNA ligase (598 aa).

The short motif at 139 to 149 is the 'HIGH' region element; the sequence is ANPTGPMHVGH.

This sequence belongs to the class-I aminoacyl-tRNA synthetase family. Monomer.

The protein resides in the cytoplasm. The catalysed reaction is tRNA(Arg) + L-arginine + ATP = L-arginyl-tRNA(Arg) + AMP + diphosphate. The protein is Arginine--tRNA ligase of Bradyrhizobium sp. (strain ORS 278).